A 212-amino-acid chain; its full sequence is SOSS complex subunit B1 (212 aa).

The segment at residues 22–92 is a DNA-binding region (OB); the sequence is IVLETGRVTK…TLYTGRGGDL (71 aa). Residues 110 to 212 form a disordered region; sequence EPNPEYNTQQ…GKETRRSSKR (103 aa). The segment covering 114 to 130 has biased composition (polar residues); it reads EYNTQQAPNKSVQNNDN. The residue at position 117 (Thr117) is a Phosphothreonine; by ATM. A compositionally biased stretch (low complexity) spans 131–148; that stretch reads SPTAPQATTGPPAASPAS. The span at 149–160 shows a compositional bias: polar residues; it reads ENQNGNGLSTQL. A compositionally biased stretch (low complexity) spans 166–178; the sequence is PHPSHTPSHPPST.

The protein belongs to the SOSS-B family. SOSS-B1 subfamily. In terms of assembly, component of the SOSS complex, composed of SOSS-B (SOSS-B1/NABP2 or SOSS-B2/NABP1), SOSS-A/INTS3 and SOSS-C/INIP. SOSS complexes containing SOSS-B1/NABP2 are more abundant than complexes containing SOSS-B2/NABP1. Directly interacts with ATM, SOSS-A/INTS3 and RAD51. Interacts with INTS7. Phosphorylated by ATM in response to DNA damage. Phosphorylation prevents degradation by the proteasome, hence stabilization of the protein and accumulation within cells. In terms of processing, ubiquitinated in a FBXL5-dependent manner, leading to proteasomal degradation.

It localises to the nucleus. Its function is as follows. Component of the SOSS complex, a multiprotein complex that functions downstream of the MRN complex to promote DNA repair and G2/M checkpoint. In the SOSS complex, acts as a sensor of single-stranded DNA that binds to single-stranded DNA, in particular to polypyrimidines. The SOSS complex associates with DNA lesions and influences diverse endpoints in the cellular DNA damage response including cell-cycle checkpoint activation, recombinational repair and maintenance of genomic stability. Required for efficient homologous recombination-dependent repair of double-strand breaks (DSBs) and ATM-dependent signaling pathways. This chain is SOSS complex subunit B1 (Nabp2), found in Mus musculus (Mouse).